Consider the following 467-residue polypeptide: FAD-dependent oxidoreductase dbaF (467 aa).

An N-terminal signal peptide occupies residues M1–A20. 5 N-linked (GlcNAc...) asparagine glycosylation sites follow: N96, N134, N337, N391, and N451.

Belongs to the beta-cyclopiazonate dehydrogenase family. The cofactor is FAD.

It participates in secondary metabolite biosynthesis. In terms of biological role, FAD-dependent oxidoreductase; part of the gene cluster that mediates the biosynthesis of the antibiotic 2,4-dihydroxy-3-methyl-6-(2-oxopropyl)benzaldehyde (DHMBA) and its derivatives. The direct non-reducing polyketide synthase dbaI product is 2,4-dihydroxy-3-methyl-6-(2-oxopropyl)benzaldehyde (DHMBA), produced by condensation of one acetyl-CoA starter unit with 4 malonyl-CoA units and one methylation step. The FAD-dependent monooxygenase dbaH is responsible for the synthesis of yellow pigments derived from the oxidation of DHMBA. The roles of dbaB, C, E and F have still to be determined. The chain is FAD-dependent oxidoreductase dbaF from Emericella nidulans (strain FGSC A4 / ATCC 38163 / CBS 112.46 / NRRL 194 / M139) (Aspergillus nidulans).